Reading from the N-terminus, the 341-residue chain is Retinol dehydrogenase 10 (341 aa).

Residues 3–23 (IVLEFFLVTFKVLWAFVLAAA) traverse the membrane as a helical; Signal-anchor segment. 40-64 (LITGAGSGLGRLFALEFARRRAQLV) is an NADP(+) binding site. Ser197 contacts substrate. The active-site Proton acceptor is the Tyr210.

This sequence belongs to the short-chain dehydrogenases/reductases (SDR) family.

It localises to the microsome membrane. The protein localises to the endoplasmic reticulum membrane. The enzyme catalyses all-trans-retinol + NADP(+) = all-trans-retinal + NADPH + H(+). The protein operates within cofactor metabolism; retinol metabolism. Functionally, retinol dehydrogenase with a clear preference for NADP. Converts all-trans-retinol to all-trans-retinal. Has no detectable activity towards 11-cis-retinol, 9-cis-retinol and 13-cis-retinol. This chain is Retinol dehydrogenase 10 (rdh10), found in Xenopus tropicalis (Western clawed frog).